Reading from the N-terminus, the 567-residue chain is Fanconi anemia group C protein homolog (567 aa).

As to quaternary structure, belongs to the multisubunit FA complex composed of FANCA, FANCB, FANCC, FANCE, FANCF, FANCG, FANCL/PHF9 and FANCM. This complex may also include HSP70. Interacts with ZBTB32. Upon IFNG induction, interacts with STAT1. Interacts with CDK1. Interacts with EIF2AK2.

The protein resides in the nucleus. It is found in the cytoplasm. Its function is as follows. DNA repair protein that may operate in a postreplication repair or a cell cycle checkpoint function. May be implicated in interstrand DNA cross-link repair and in the maintenance of normal chromosome stability. Upon IFNG induction, may facilitate STAT1 activation by recruiting STAT1 to IFNGR1. This chain is Fanconi anemia group C protein homolog (FANCC), found in Bos taurus (Bovine).